The primary structure comprises 180 residues: NAD(P)H-quinone oxidoreductase subunit I, chloroplastic (180 aa).

4Fe-4S ferredoxin-type domains lie at 55–84 and 95–124; these read GRIH…VDWR and LNYS…MTEE. Residues C64, C67, C70, C74, C104, C107, C110, and C114 each contribute to the [4Fe-4S] cluster site.

The protein belongs to the complex I 23 kDa subunit family. NDH is composed of at least 16 different subunits, 5 of which are encoded in the nucleus. It depends on [4Fe-4S] cluster as a cofactor.

Its subcellular location is the plastid. The protein resides in the chloroplast thylakoid membrane. The catalysed reaction is a plastoquinone + NADH + (n+1) H(+)(in) = a plastoquinol + NAD(+) + n H(+)(out). The enzyme catalyses a plastoquinone + NADPH + (n+1) H(+)(in) = a plastoquinol + NADP(+) + n H(+)(out). Its function is as follows. NDH shuttles electrons from NAD(P)H:plastoquinone, via FMN and iron-sulfur (Fe-S) centers, to quinones in the photosynthetic chain and possibly in a chloroplast respiratory chain. The immediate electron acceptor for the enzyme in this species is believed to be plastoquinone. Couples the redox reaction to proton translocation, and thus conserves the redox energy in a proton gradient. The chain is NAD(P)H-quinone oxidoreductase subunit I, chloroplastic from Zea mays (Maize).